The following is a 949-amino-acid chain: AP-1 complex subunit beta-1 (949 aa).

Position 318 is an N6-acetyllysine (K318). Y574 carries the 3'-nitrotyrosine modification. Residues 584 to 625 (GGRGVVHKSLPPRTASSESAESPETAPTGAPPGEQPDVIPAQ) form a disordered region. Residues 594-611 (PPRTASSESAESPETAPT) show a composition bias toward low complexity.

Belongs to the adaptor complexes large subunit family. As to quaternary structure, adaptor protein complex 1 (AP-1) is a heterotetramer composed of two large adaptins (gamma-type subunit AP1G1 and beta-type subunit AP1B1), a medium adaptin (mu-type subunit AP1M1 or AP1M2) and a small adaptin (sigma-type subunit AP1S1 or AP1S2 or AP1S3). Widely expressed.

The protein localises to the golgi apparatus. It localises to the cytoplasmic vesicle. The protein resides in the clathrin-coated vesicle membrane. Functionally, subunit of clathrin-associated adaptor protein complex 1 that plays a role in protein sorting in the late-Golgi/trans-Golgi network (TGN) and/or endosomes. The AP complexes mediate both the recruitment of clathrin to membranes and the recognition of sorting signals within the cytosolic tails of transmembrane cargo molecules. This chain is AP-1 complex subunit beta-1 (AP1B1), found in Homo sapiens (Human).